Reading from the N-terminus, the 43-residue chain is uncharacterized protein (43 aa).

The interval 1–43 (MFKSRIETGGFQFQVHGDDESAMDDEFIDDDDDQQVVEPVTDN) is disordered. The span at 20 to 35 (ESAMDDEFIDDDDDQQ) shows a compositional bias: acidic residues.

This is an uncharacterized protein from Dictyostelium discoideum (Social amoeba).